Reading from the N-terminus, the 422-residue chain is Steroid hormone receptor ERR1 (422 aa).

Residues 1-66 form a disordered region; it reads MSSQVVGIEP…EGAGSGEQGS (66 aa). The segment at 1 to 76 is repressor domain; sequence MSSQVVGIEP…GKLVLSSLPK (76 aa). Lysine 14 is covalently cross-linked (Glycyl lysine isopeptide (Lys-Gly) (interchain with G-Cter in SUMO)). Serine 19 and serine 22 each carry phosphoserine. A DNA-binding region (nuclear receptor) is located at residues 76-151; sequence KRLCLVCGDV…VGMLKEGVRL (76 aa). 2 consecutive NR C4-type zinc fingers follow at residues 79–99 and 115–134; these read CLVCGDVASGYHYGVASCEAC and CPASNECEITKRRRKACQAC. N6-acetyllysine; by PCAF/KAT2B occurs at positions 129, 138, 160, and 162. Lysine 189 is covalently cross-linked (Glycyl lysine isopeptide (Lys-Gly) (interchain with G-Cter in SUMO2)). An NR LBD domain is found at 192–420; the sequence is PVNALVSHLL…KLFLEMLEAM (229 aa). A Glycyl lysine isopeptide (Lys-Gly) (interchain with G-Cter in SUMO); alternate cross-link involves residue lysine 402. A Glycyl lysine isopeptide (Lys-Gly) (interchain with G-Cter in SUMO2); alternate cross-link involves residue lysine 402. The AF-2 domain stretch occupies residues 402–422; that stretch reads KLEGKVPMHKLFLEMLEAMMD.

The protein belongs to the nuclear hormone receptor family. NR3 subfamily. Binds DNA as a monomer or a homodimer. Interacts (via the AF2 domain) with coactivator PPARGC1A (via the L3 motif); the interaction greatly enhances transcriptional activity of genes involved in energy metabolism. Interacts with PIAS4; the interaction enhances sumoylation. Interacts with MAPK15; promotes re-localization of ESRRA to the cytoplasm through a XPO1-dependent mechanism then inhibits ESRRA transcriptional activity. In terms of processing, phosphorylation on Ser-19 enhances sumoylation on Lys-14 increasing repression of transcriptional activity. Post-translationally, sumoylated with SUMO2. Main site is Lys-14 which is enhanced by phosphorylation on Ser-19, cofactor activation, and by interaction with PIAS4. Sumoylation enhances repression of transcriptional activity, but has no effect on subcellular location nor on DNA binding. Reversibly acetylated. Acetylation by PCAF/KAT2 at Lys-129, Lys-138, Lys-160 and Lys-162 and PCAF/KAT2 decreases transcriptional activity probably by inhibiting DNA-binding activity; deacetylation involves SIRT1 and HDAC8 and increases DNA-binding. As to expression, most highly expressed in kidney, heart, and brown adipocytes. Also found in uterus, cervix and vagina.

Its subcellular location is the nucleus. It localises to the cytoplasm. In terms of biological role, binds to an ERR-alpha response element (ERRE) containing a single consensus half-site, 5'-TNAAGGTCA-3'. Can bind to the medium-chain acyl coenzyme A dehydrogenase (MCAD) response element NRRE-1 and may act as an important regulator of MCAD promoter. Binds to the C1 region of the lactoferrin gene promoter. Requires dimerization and the coactivator, PGC-1A, for full activity. The ERRalpha/PGC1alpha complex is a regulator of energy metabolism. Induces the expression of PERM1 in the skeletal muscle. The sequence is that of Steroid hormone receptor ERR1 (Esrra) from Mus musculus (Mouse).